The primary structure comprises 293 residues: Elongation factor Ts (293 aa).

The segment at 79 to 82 (TDFV) is involved in Mg(2+) ion dislocation from EF-Tu.

It belongs to the EF-Ts family.

The protein resides in the cytoplasm. Functionally, associates with the EF-Tu.GDP complex and induces the exchange of GDP to GTP. It remains bound to the aminoacyl-tRNA.EF-Tu.GTP complex up to the GTP hydrolysis stage on the ribosome. The polypeptide is Elongation factor Ts (Bacillus licheniformis (strain ATCC 14580 / DSM 13 / JCM 2505 / CCUG 7422 / NBRC 12200 / NCIMB 9375 / NCTC 10341 / NRRL NRS-1264 / Gibson 46)).